Here is a 241-residue protein sequence, read N- to C-terminus: 1-(5-phosphoribosyl)-5-[(5-phosphoribosylamino)methylideneamino] imidazole-4-carboxamide isomerase (241 aa).

Catalysis depends on Asp-10, which acts as the Proton acceptor. Residue Asp-131 is the Proton donor of the active site.

It belongs to the HisA/HisF family.

The protein localises to the cytoplasm. It catalyses the reaction 1-(5-phospho-beta-D-ribosyl)-5-[(5-phospho-beta-D-ribosylamino)methylideneamino]imidazole-4-carboxamide = 5-[(5-phospho-1-deoxy-D-ribulos-1-ylimino)methylamino]-1-(5-phospho-beta-D-ribosyl)imidazole-4-carboxamide. Its pathway is amino-acid biosynthesis; L-histidine biosynthesis; L-histidine from 5-phospho-alpha-D-ribose 1-diphosphate: step 4/9. This chain is 1-(5-phosphoribosyl)-5-[(5-phosphoribosylamino)methylideneamino] imidazole-4-carboxamide isomerase, found in Bifidobacterium adolescentis (strain ATCC 15703 / DSM 20083 / NCTC 11814 / E194a).